A 338-amino-acid chain; its full sequence is Anthranilate phosphoribosyltransferase (338 aa).

5-phospho-alpha-D-ribose 1-diphosphate is bound by residues G80, 83–84, T88, 90–93, 108–116, and S120; these read GD, NIST, and KHGNRAVSS. G80 serves as a coordination point for anthranilate. S92 provides a ligand contact to Mg(2+). An anthranilate-binding site is contributed by N111. R166 contributes to the anthranilate binding site. Residues D225 and E226 each coordinate Mg(2+).

It belongs to the anthranilate phosphoribosyltransferase family. In terms of assembly, homodimer. Requires Mg(2+) as cofactor.

It carries out the reaction N-(5-phospho-beta-D-ribosyl)anthranilate + diphosphate = 5-phospho-alpha-D-ribose 1-diphosphate + anthranilate. It participates in amino-acid biosynthesis; L-tryptophan biosynthesis; L-tryptophan from chorismate: step 2/5. In terms of biological role, catalyzes the transfer of the phosphoribosyl group of 5-phosphorylribose-1-pyrophosphate (PRPP) to anthranilate to yield N-(5'-phosphoribosyl)-anthranilate (PRA). This is Anthranilate phosphoribosyltransferase from Thermoanaerobacter sp. (strain X514).